The following is a 166-amino-acid chain: MFAYNHKTLHVCLRLISLRNCSNTWTFVPYANSNRGLNINQQLKLFNRRSKIALSSFIIPTSVDILVKVAGFQRYIVNVEFSNVQSYFRYYNYISLYFVTHSKVPLNRLPNSMIPYTVFAHFDIVPYTTYSILTKYRCAQDKEREIVGLINASQSKLRYKFCGLRN.

This is an uncharacterized protein from Schizosaccharomyces pombe (strain 972 / ATCC 24843) (Fission yeast).